The following is a 381-amino-acid chain: Arrestin homolog (381 aa).

The protein belongs to the arrestin family.

This is Arrestin homolog from Heliothis virescens (Tobacco budworm moth).